The chain runs to 264 residues: Transmembrane protein 41A (264 aa).

An N-terminal signal peptide occupies residues 1–17 (MRPLLGLLLVFAGCTFA). The next 5 helical transmembrane spans lie at 67 to 87 (AYVFLLFCGAYLYKQGFAIPG), 100 to 122 (GPWLGLLLCCVLTSVGATCCYLL), 153 to 173 (LFFFLLFLRLFPMTPNWFLNL), 175 to 195 (APILNIPIVQFFFSVLIGLIP), and 219 to 239 (WDTVFKLLAIAMVALIPGTLI). Residues 96–207 (GALFGPWLGL…FICVQTGSIL (112 aa)) form a VTT domain region. N-linked (GlcNAc...) asparagine glycosylation is present at N250.

This sequence belongs to the TMEM41 family.

The protein localises to the membrane. This Homo sapiens (Human) protein is Transmembrane protein 41A (TMEM41A).